A 526-amino-acid chain; its full sequence is Butyrophilin subfamily 1 member A1 (526 aa).

The N-terminal stretch at 1 to 26 (MAVFPNSCLAGCLLIFILLQLPKLDS) is a signal peptide. Ig-like V-type domains follow at residues 27–140 (APFD…VHLK) and 148–234 (PHIS…VEVS). Residues 27–242 (APFDVIGPQE…VSIPASFFPR (216 aa)) are Extracellular-facing. Cystine bridges form between C50–C124 and C164–C218. N55 is a glycosylation site (N-linked (GlcNAc...) (complex) asparagine). N-linked (GlcNAc...) (hybrid) asparagine glycosylation is present at N215. A helical transmembrane segment spans residues 243-269 (LTPWMVAVAVILVVLGLLTIGSIFFTW). Topologically, residues 270-526 (RLYKERSRQR…IPLQPSQGVP (257 aa)) are cytoplasmic. The region spanning 285-479 (SKEKLLEELK…LTICPVTDGL (195 aa)) is the B30.2/SPRY domain.

The protein belongs to the immunoglobulin superfamily. BTN/MOG family. Seems to associate with xanthine dehydrogenase/oxidase. As to expression, expressed in mammary tissue.

It is found in the membrane. Functionally, may function in the secretion of milk-fat droplets. May act as a specific membrane-associated receptor for the association of cytoplasmic droplets with the apical plasma membrane. Inhibits the proliferation of CD4 and CD8 T-cells activated by anti-CD3 antibodies, T-cell metabolism and IL2 and IFNG secretion. The protein is Butyrophilin subfamily 1 member A1 (BTN1A1) of Bos taurus (Bovine).